A 443-amino-acid polypeptide reads, in one-letter code: tRNA modification GTPase MnmE (443 aa).

Arg-19, Glu-78, and Lys-118 together coordinate (6S)-5-formyl-5,6,7,8-tetrahydrofolate. The region spanning 214–366 is the TrmE-type G domain; the sequence is GFKIAIIGPT…LISKIKNKLK (153 aa). Asn-224 lines the K(+) pocket. GTP is bound by residues 224–229, 243–249, and 268–271; these read NAGKSS, SEIAGTT, and DTAG. A Mg(2+)-binding site is contributed by Ser-228. K(+) contacts are provided by Ser-243, Ile-245, and Thr-248. Residue Thr-249 participates in Mg(2+) binding. Lys-443 contributes to the (6S)-5-formyl-5,6,7,8-tetrahydrofolate binding site.

This sequence belongs to the TRAFAC class TrmE-Era-EngA-EngB-Septin-like GTPase superfamily. TrmE GTPase family. Homodimer. Heterotetramer of two MnmE and two MnmG subunits. Requires K(+) as cofactor.

It localises to the cytoplasm. In terms of biological role, exhibits a very high intrinsic GTPase hydrolysis rate. Involved in the addition of a carboxymethylaminomethyl (cmnm) group at the wobble position (U34) of certain tRNAs, forming tRNA-cmnm(5)s(2)U34. This is tRNA modification GTPase MnmE from Pelagibacter ubique (strain HTCC1062).